The primary structure comprises 640 residues: Pro-neuregulin-1, membrane-bound isoform (640 aa).

The propeptide occupies 1 to 19 (MSERKEGRGKGKGKKKERG). The segment at 1 to 53 (MSERKEGRGKGKGKKKERGSGKKPESAAGSQSPALPPRLKEMKSQESAAGSKL) is disordered. Over 20–242 (SGKKPESAAG…EKAEELYQKR (223 aa)) the chain is Extracellular. An Ig-like C2-type domain is found at 37–128 (PRLKEMKSQE…GNDSASANIT (92 aa)). Cys-57 and Cys-112 form a disulfide bridge. Residues Asn-120, Asn-126, and Asn-164 are each glycosylated (N-linked (GlcNAc...) asparagine). The region spanning 178-222 (HLVKCAEKEKTFCVNGGECFMVKDLSNPSRYLCKCQPGFTGARCT) is the EGF-like domain. Intrachain disulfides connect Cys-182-Cys-196, Cys-190-Cys-210, and Cys-212-Cys-221. The chain crosses the membrane as a helical span at residues 243–265 (VLTITGICIALLVVGIMCVVAYC). Residues 266 to 640 (KTKKQRKKLH…VIANQDPIAV (375 aa)) are Cytoplasmic-facing. Residues 334 to 350 (TSHYTSTAHHSTTVTQT) are compositionally biased toward low complexity. Disordered regions lie at residues 334-360 (TSHYTSTAHHSTTVTQTPSHSWSNGHT), 375-399 (SVENSRHSSPTGGPRGRLNGTGGPR), 433-461 (RMSPVDFHTPSSPKSPPSEMSPPVSSMTV), and 524-588 (EYET…DTPF). Residues 351 to 360 (PSHSWSNGHT) show a composition bias toward polar residues. Residues 387-397 (GPRGRLNGTGG) show a composition bias toward gly residues. Over residues 542–552 (ANSRRAKRTKP) the composition is skewed to basic residues. A compositionally biased stretch (low complexity) spans 563-574 (DSNTSSQSSNSE).

The protein belongs to the neuregulin family. In terms of assembly, the cytoplasmic domain interacts with the LIM domain region of LIMK1. Forms a ternary complex with ERBB3 and ITGAV:ITGB3 or ITGA6:ITGB4. Interacts with NRDC and BACE1. Post-translationally, proteolytic cleavage close to the plasma membrane on the external face leads to the release of the soluble growth factor form. N- and O-glycosylated. Extensive glycosylation precedes the proteolytic cleavage. As to expression, type I isoforms are the predominant forms expressed in the endocardium. Isoform alpha is expressed in breast, ovary, testis, prostate, heart, skeletal muscle, lung, placenta liver, kidney, salivary gland, small intestine and brain, but not in uterus, stomach, pancreas, and spleen. Isoform 3 is the predominant form in mesenchymal cells and in non-neuronal organs, whereas isoform 6 is the major neuronal form. Isoform 8 is expressed in spinal cord and brain. Isoform 9 is the major form in skeletal muscle cells; in the nervous system it is expressed in spinal cord and brain. Also detected in adult heart, placenta, lung, liver, kidney, and pancreas. Isoform 10 is expressed in nervous system: spinal cord motor neurons, dorsal root ganglion neurons, and brain. Predominant isoform expressed in sensory and motor neurons. Not detected in adult heart, placenta, lung, liver, skeletal muscle, kidney, and pancreas. Not expressed in fetal lung, liver and kidney. Type IV isoforms are brain-specific.

Its subcellular location is the cell membrane. It localises to the secreted. The protein localises to the nucleus. The protein resides in the membrane. Its function is as follows. Direct ligand for ERBB3 and ERBB4 tyrosine kinase receptors. Concomitantly recruits ERBB1 and ERBB2 coreceptors, resulting in ligand-stimulated tyrosine phosphorylation and activation of the ERBB receptors. The multiple isoforms perform diverse functions such as inducing growth and differentiation of epithelial, glial, neuronal, and skeletal muscle cells; inducing expression of acetylcholine receptor in synaptic vesicles during the formation of the neuromuscular junction; stimulating lobuloalveolar budding and milk production in the mammary gland and inducing differentiation of mammary tumor cells; stimulating Schwann cell proliferation; implication in the development of the myocardium such as trabeculation of the developing heart. Isoform 10 may play a role in motor and sensory neuron development. Binds to ERBB4. Binds to ERBB3. Acts as a ligand for integrins and binds (via EGF domain) to integrins ITGAV:ITGB3 or ITGA6:ITGB4. Its binding to integrins and subsequent ternary complex formation with integrins and ERRB3 are essential for NRG1-ERBB signaling. Induces the phosphorylation and activation of MAPK3/ERK1, MAPK1/ERK2 and AKT1. Ligand-dependent ERBB4 endocytosis is essential for the NRG1-mediated activation of these kinases in neurons. The polypeptide is Pro-neuregulin-1, membrane-bound isoform (NRG1) (Homo sapiens (Human)).